We begin with the raw amino-acid sequence, 100 residues long: Large ribosomal subunit protein uL23 (100 aa).

Belongs to the universal ribosomal protein uL23 family. In terms of assembly, part of the 50S ribosomal subunit. Contacts protein L29, and trigger factor when it is bound to the ribosome.

Functionally, one of the early assembly proteins it binds 23S rRNA. One of the proteins that surrounds the polypeptide exit tunnel on the outside of the ribosome. Forms the main docking site for trigger factor binding to the ribosome. The chain is Large ribosomal subunit protein uL23 from Shewanella oneidensis (strain ATCC 700550 / JCM 31522 / CIP 106686 / LMG 19005 / NCIMB 14063 / MR-1).